A 431-amino-acid chain; its full sequence is Tol-Pal system protein TolB (431 aa).

Positions 1-26 (MSLMTKLGFRALVASCLITAGSAANA) are cleaved as a signal peptide. The tract at residues 406–431 (DGSAPPQILSVQGGSVREPSWGPFMQ) is disordered.

It belongs to the TolB family. As to quaternary structure, the Tol-Pal system is composed of five core proteins: the inner membrane proteins TolA, TolQ and TolR, the periplasmic protein TolB and the outer membrane protein Pal. They form a network linking the inner and outer membranes and the peptidoglycan layer.

It localises to the periplasm. Its function is as follows. Part of the Tol-Pal system, which plays a role in outer membrane invagination during cell division and is important for maintaining outer membrane integrity. This Burkholderia cenocepacia (strain ATCC BAA-245 / DSM 16553 / LMG 16656 / NCTC 13227 / J2315 / CF5610) (Burkholderia cepacia (strain J2315)) protein is Tol-Pal system protein TolB.